The chain runs to 415 residues: Histidine--tRNA ligase (415 aa).

The protein belongs to the class-II aminoacyl-tRNA synthetase family. In terms of assembly, homodimer.

The protein resides in the cytoplasm. It catalyses the reaction tRNA(His) + L-histidine + ATP = L-histidyl-tRNA(His) + AMP + diphosphate + H(+). The polypeptide is Histidine--tRNA ligase (Clostridium botulinum (strain Langeland / NCTC 10281 / Type F)).